The chain runs to 104 residues: Large ribosomal subunit protein uL24 (104 aa).

It belongs to the universal ribosomal protein uL24 family. In terms of assembly, part of the 50S ribosomal subunit.

Functionally, one of two assembly initiator proteins, it binds directly to the 5'-end of the 23S rRNA, where it nucleates assembly of the 50S subunit. Its function is as follows. One of the proteins that surrounds the polypeptide exit tunnel on the outside of the subunit. In Erwinia tasmaniensis (strain DSM 17950 / CFBP 7177 / CIP 109463 / NCPPB 4357 / Et1/99), this protein is Large ribosomal subunit protein uL24.